We begin with the raw amino-acid sequence, 401 residues long: Phosphoglycerate kinase (401 aa).

Substrate is bound by residues 23–25, Arg-39, 62–65, Arg-121, and Arg-154; these read DFN and HLGR. ATP-binding positions include Lys-207, Gly-298, Glu-329, and 355 to 358; that span reads GGDT.

It belongs to the phosphoglycerate kinase family. In terms of assembly, monomer.

Its subcellular location is the cytoplasm. The catalysed reaction is (2R)-3-phosphoglycerate + ATP = (2R)-3-phospho-glyceroyl phosphate + ADP. It functions in the pathway carbohydrate degradation; glycolysis; pyruvate from D-glyceraldehyde 3-phosphate: step 2/5. The polypeptide is Phosphoglycerate kinase (Campylobacter fetus subsp. fetus (strain 82-40)).